The sequence spans 246 residues: Cell division protein ZapD (246 aa).

The protein belongs to the ZapD family. In terms of assembly, interacts with FtsZ.

It localises to the cytoplasm. Cell division factor that enhances FtsZ-ring assembly. Directly interacts with FtsZ and promotes bundling of FtsZ protofilaments, with a reduction in FtsZ GTPase activity. This is Cell division protein ZapD from Vibrio parahaemolyticus serotype O3:K6 (strain RIMD 2210633).